The primary structure comprises 103 residues: Sec-independent protein translocase protein TatA (103 aa).

The helical transmembrane segment at 1–21 (MSLGPWEIAIIVLLIIVLFGA) threads the bilayer. Residues 42–103 (VKEMQKDDET…QNYEDPNRTP (62 aa)) form a disordered region. The span at 52–90 (PAQPEQQPQGYQHPQQIEAPQNLQQPNFQQHYQNQPQQP) shows a compositional bias: low complexity. Basic and acidic residues predominate over residues 94–103 (QNYEDPNRTP).

It belongs to the TatA/E family. The Tat system comprises two distinct complexes: a TatABC complex, containing multiple copies of TatA, TatB and TatC subunits, and a separate TatA complex, containing only TatA subunits. Substrates initially bind to the TatABC complex, which probably triggers association of the separate TatA complex to form the active translocon.

The protein resides in the cell membrane. In terms of biological role, part of the twin-arginine translocation (Tat) system that transports large folded proteins containing a characteristic twin-arginine motif in their signal peptide across membranes. TatA could form the protein-conducting channel of the Tat system. The polypeptide is Sec-independent protein translocase protein TatA (Corynebacterium efficiens (strain DSM 44549 / YS-314 / AJ 12310 / JCM 11189 / NBRC 100395)).